An 806-amino-acid chain; its full sequence is Phenylalanine--tRNA ligase beta subunit (806 aa).

The tRNA-binding domain occupies 40 to 155; it reads NKGVKGVVVG…SDAEVGADAL (116 aa). In terms of domain architecture, B5 spans 409-484; it reads VQERTVSVTA…RLYGYDHIPV (76 aa). Aspartate 462, aspartate 468, glutamate 471, and glutamate 472 together coordinate Mg(2+). The FDX-ACB domain occupies 712–805; the sequence is PRFPSMTRDM…VEEKFGAELR (94 aa).

It belongs to the phenylalanyl-tRNA synthetase beta subunit family. Type 1 subfamily. In terms of assembly, tetramer of two alpha and two beta subunits. Requires Mg(2+) as cofactor.

The protein localises to the cytoplasm. The catalysed reaction is tRNA(Phe) + L-phenylalanine + ATP = L-phenylalanyl-tRNA(Phe) + AMP + diphosphate + H(+). This chain is Phenylalanine--tRNA ligase beta subunit, found in Bacillus cereus (strain ATCC 14579 / DSM 31 / CCUG 7414 / JCM 2152 / NBRC 15305 / NCIMB 9373 / NCTC 2599 / NRRL B-3711).